We begin with the raw amino-acid sequence, 130 residues long: Flagellar assembly factor FliW (130 aa).

Belongs to the FliW family. As to quaternary structure, interacts with translational regulator CsrA and flagellin(s).

The protein localises to the cytoplasm. Its function is as follows. Acts as an anti-CsrA protein, binds CsrA and prevents it from repressing translation of its target genes, one of which is flagellin. Binds to flagellin and participates in the assembly of the flagellum. This Borrelia turicatae (strain 91E135) protein is Flagellar assembly factor FliW.